The primary structure comprises 314 residues: tRNA dimethylallyltransferase 1 (314 aa).

8-15 (GPTGTGKS) lines the ATP pocket. Position 10–15 (10–15 (TGTGKS)) interacts with substrate.

The protein belongs to the IPP transferase family. Monomer. Mg(2+) serves as cofactor.

It catalyses the reaction adenosine(37) in tRNA + dimethylallyl diphosphate = N(6)-dimethylallyladenosine(37) in tRNA + diphosphate. In terms of biological role, catalyzes the transfer of a dimethylallyl group onto the adenine at position 37 in tRNAs that read codons beginning with uridine, leading to the formation of N6-(dimethylallyl)adenosine (i(6)A). This chain is tRNA dimethylallyltransferase 1, found in Mycobacterium marinum (strain ATCC BAA-535 / M).